Consider the following 296-residue polypeptide: Nucleotide-binding protein Rmet_0297 (296 aa).

8-15 (GISGSGKS) serves as a coordination point for ATP. 57–60 (DIRS) contributes to the GTP binding site.

It belongs to the RapZ-like family.

Displays ATPase and GTPase activities. The sequence is that of Nucleotide-binding protein Rmet_0297 from Cupriavidus metallidurans (strain ATCC 43123 / DSM 2839 / NBRC 102507 / CH34) (Ralstonia metallidurans).